Here is a 341-residue protein sequence, read N- to C-terminus: Anthranilate phosphoribosyltransferase (341 aa).

5-phospho-alpha-D-ribose 1-diphosphate-binding positions include glycine 84, 87 to 88 (GD), threonine 92, 94 to 97 (NIST), 112 to 120 (KHGNRSVSS), and serine 124. Glycine 84 is a binding site for anthranilate. Serine 96 is a binding site for Mg(2+). Asparagine 115 is a binding site for anthranilate. Position 170 (arginine 170) interacts with anthranilate. Positions 229 and 230 each coordinate Mg(2+).

It belongs to the anthranilate phosphoribosyltransferase family. Homodimer. The cofactor is Mg(2+).

The catalysed reaction is N-(5-phospho-beta-D-ribosyl)anthranilate + diphosphate = 5-phospho-alpha-D-ribose 1-diphosphate + anthranilate. It participates in amino-acid biosynthesis; L-tryptophan biosynthesis; L-tryptophan from chorismate: step 2/5. Catalyzes the transfer of the phosphoribosyl group of 5-phosphorylribose-1-pyrophosphate (PRPP) to anthranilate to yield N-(5'-phosphoribosyl)-anthranilate (PRA). The chain is Anthranilate phosphoribosyltransferase from Polynucleobacter asymbioticus (strain DSM 18221 / CIP 109841 / QLW-P1DMWA-1) (Polynucleobacter necessarius subsp. asymbioticus).